Here is a 94-residue protein sequence, read N- to C-terminus: RING finger protein Z (94 aa).

Residues 1-22 (MGNCNKPPKRPPNTQTSAAQPS) are disordered. The N-myristoyl glycine; by host moiety is linked to residue Gly-2. The segment at 39–75 (CKCCWFADTNLITCNDHYLCLRCHQTMLRNSELCHIC) adopts an RING-type; atypical zinc-finger fold. The PTAP/PSAP motif signature appears at 89-92 (PSAP).

It belongs to the arenaviridae Z protein family. As to quaternary structure, interacts with protein NP; this interaction probably directs the encapsidated genome to budding sites. Interacts (via RING domain) with polymerase L; this interaction inhibits viral transcription and replication, Z partially blocks the product exit tunnel for the releasing nascent RNA product. Interacts with the glycoprotein complex; this interaction plays a role in virion budding. Interacts with host eIF4E; this interaction results in eIF4E reduced affinity for its substrate, the 5'-m7 G cap structure. Interacts (via late-budding domain) with host TSG101; this interaction is essential for budding and release of viral particles. Interacts with host RPLP0; this interaction may serve to load ribosome-like particles inside the virion. Interacts with host PML; this interaction induces PML bodies redistribution in the cytoplasm upon viral infection. In terms of processing, myristoylation is required for the role of RING finger protein Z in assembly and budding.

The protein localises to the virion. Its subcellular location is the host cytoplasm. It localises to the host perinuclear region. It is found in the host cell membrane. Functionally, plays a crucial role in virion assembly and budding. Expressed late in the virus life cycle, it acts as an inhibitor of viral transcription and RNA synthesis by interacting with the viral polymerase L. Presumably recruits the NP encapsidated genome to cellular membranes at budding sites via direct interaction with NP. Plays critical roles in the final steps of viral release by interacting with host TSG101, a member of the vacuolar protein-sorting pathway and using other cellular host proteins involved in vesicle formation pathway. The budding of the virus progeny occurs after association of protein Z with the viral glycoprotein complex SSP-GP1-GP2 at the cell periphery, step that requires myristoylation of protein Z. Also selectively represses protein production by associating with host eIF4E. In cell-based minigenome assay, has an inhibitory effect on the ribonucleoprotein machinery (vRNP), which is responsible for the replication and transcription of the viral genome. This chain is RING finger protein Z, found in Calomys callosus (Large vesper mouse).